The sequence spans 317 residues: MKPLNIIFAGTPDFAAQHLQALLQSQHNVLAVYTQPDKPAGRGQTLRASAVKILAEKHHIPVYQPKSLRKVEVQEHLSKLNADVMVVVAYGLILPLAVLQTFPLGCLNVHGSLLPRWRGAAPIQRAIWAGDKKTGVTIMQMNEGLDTGDMLHKVCCDITPTETSTSLYTKLANIAPKALLEVLDGLEQGLFKAEVQDESLSNYAEKLSKEEAKLDWSLSAEQLERCIRAFNPWPMSYFVTQDSQGTLQTLKVYQASVLPHQNKPCGTILAADKRGIQVATANGVLNLEQLQPAGKKPMSARDLLNSRADWFKIGQVL.

112-115 (SLLP) is a binding site for (6S)-5,6,7,8-tetrahydrofolate.

The protein belongs to the Fmt family.

The catalysed reaction is L-methionyl-tRNA(fMet) + (6R)-10-formyltetrahydrofolate = N-formyl-L-methionyl-tRNA(fMet) + (6S)-5,6,7,8-tetrahydrofolate + H(+). Attaches a formyl group to the free amino group of methionyl-tRNA(fMet). The formyl group appears to play a dual role in the initiator identity of N-formylmethionyl-tRNA by promoting its recognition by IF2 and preventing the misappropriation of this tRNA by the elongation apparatus. The sequence is that of Methionyl-tRNA formyltransferase from Histophilus somni (strain 2336) (Haemophilus somnus).